Consider the following 566-residue polypeptide: Beta-1,4 N-acetylgalactosaminyltransferase 2 (566 aa).

Positions 1 to 22 are ER exit and post-Golgi subcellular localization; the sequence is MGSAGFSVGKFHVEVASRGREC. Residues 1–67 are Cytoplasmic-facing; it reads MGSAGFSVGK…HGRSRRQGSR (67 aa). The Vesicular targeting signature appears at 9–15; sequence GKFHVEV. Residues 68–88 form a helical; Signal-anchor for type II membrane protein membrane-spanning segment; the sequence is FLWLLKILVIILVLGIVGFMF. Over 89–566 the chain is Lumenal; sequence GSMFLQAVFS…YFKNHLQCAA (478 aa).

This sequence belongs to the glycosyltransferase 2 family. Homodimer; disulfide-linked. Widely expressed. Highly expressed in colon and to a lesser extent in kidney, stomach, ileum and rectum.

The protein resides in the golgi apparatus. Its subcellular location is the trans-Golgi network membrane. The protein localises to the cytoplasmic vesicle membrane. It carries out the reaction an N-acetyl-alpha-neuraminyl-(2-&gt;3)-beta-D-galactosyl derivative + UDP-N-acetyl-alpha-D-galactosamine = an N-acetyl-beta-D-galactosaminyl-(1-&gt;4)-[N-acetyl-alpha-neuraminyl-(2-&gt;3)]-beta-D-galactosyl derivative + UDP + H(+). The enzyme catalyses a 3-O-{alpha-Neu5Ac-(2-&gt;3)-beta-D-Gal-(1-&gt;3)-[alpha-Neu5Ac-(2-&gt;6)]-alpha-D-GalNAc}-L-seryl-[protein] + UDP-N-acetyl-alpha-D-galactosamine = a 3-O-{[alpha-Neu5Ac-(2-&gt;3)]-beta-D-GalNAc-(1-&gt;4)-beta-D-Gal-(1-&gt;3)-[alpha-Neu5Ac-(2-&gt;6)]-alpha-D-GalNAc}-L-seryl-[protein] + UDP + H(+). It catalyses the reaction a 3-O-{alpha-Neu5Ac-(2-&gt;3)-beta-D-Gal-(1-&gt;3)-[alpha-Neu5Ac-(2-&gt;6)]-alpha-D-GalNAc}-L-threonyl-[protein] + UDP-N-acetyl-alpha-D-galactosamine = a 3-O-{[alpha-Neu5Ac-(2-&gt;3)]-beta-D-GalNAc-(1-&gt;4)-beta-D-Gal-(1-&gt;3)-[alpha-Neu5Ac-(2-&gt;6)]-alpha-D-GalNAc}-L-threonyl-[protein] + UDP + H(+). The catalysed reaction is a neolactoside IV(3)-alpha-NeuAc-nLc4Cer + UDP-N-acetyl-alpha-D-galactosamine = a neolactoside IV(4)-GalNAc,IV(3)-alpha-NeuAc-nLc4Cer + UDP + H(+). Its pathway is protein modification; protein glycosylation. It participates in glycolipid biosynthesis. Functionally, beta-1,4 N-acetylgalactosaminyltransferase involved in the biosynthesis of Sd(a) histo-blood group antigen. Catalyzes the transfer of N-acetylgalactosamine (GalNAc) group in a beta-1,4-linkage from UDP-GalNAc to the galactose residue of NeuAcalpha2-&gt;3Gal-R to form Sd(a) glycan epitope GalNAcbeta1-&gt;4(NeuAcalpha2-&gt;3)Gal-R. The Sd(a) epitope is carried in O- and N-linked glycoproteins and glycolipids, including O-linked core 1 structures on GYPA/glycophorin, SLC4A1 and SLC29A1 in erythrocytes, N-linked glycans attached to the Tamm-Horsfall glycoprotein UMOD/uromodulin in renal fluids, O-linked core 3 glycans on mucins in colon and neolactosides in gastric mucosa. Confers protection against influenza A virus strains that attach to NeuAcalpha2-&gt;3-carrying host receptors. Modifies N-glycan chains on host receptors and prevents virus entry into cells. The protein is Beta-1,4 N-acetylgalactosaminyltransferase 2 of Homo sapiens (Human).